A 255-amino-acid polypeptide reads, in one-letter code: MEIIPAIDLLDGACVRLHQGDYDQVTRFSEDPVAQALSWQSQGATRLHLVDLDGAKRGEPINDAAVRAITAALDIPVQLGGGVRSLERAEELISCGLDRVILGTVAIEQPELVQELAQRHPGRIVVGIDANDGRVATRGWIEQSDVLATDLAKQFSAAGIAAIITTDIATDGTLAGPNLEALRTMAQCSAVPVIASGGIGCMADLLSLLPLEPLGVTGVIVGRALYDGRVDLAEAIAALGEARLQDVTAVAADIA.

Aspartate 8 (proton acceptor) is an active-site residue. Catalysis depends on aspartate 129, which acts as the Proton donor.

This sequence belongs to the HisA/HisF family.

It is found in the cytoplasm. The catalysed reaction is 1-(5-phospho-beta-D-ribosyl)-5-[(5-phospho-beta-D-ribosylamino)methylideneamino]imidazole-4-carboxamide = 5-[(5-phospho-1-deoxy-D-ribulos-1-ylimino)methylamino]-1-(5-phospho-beta-D-ribosyl)imidazole-4-carboxamide. It participates in amino-acid biosynthesis; L-histidine biosynthesis; L-histidine from 5-phospho-alpha-D-ribose 1-diphosphate: step 4/9. The sequence is that of 1-(5-phosphoribosyl)-5-[(5-phosphoribosylamino)methylideneamino] imidazole-4-carboxamide isomerase from Synechococcus sp. (strain CC9605).